Reading from the N-terminus, the 433-residue chain is Pyrimidine-nucleoside phosphorylase (433 aa).

81–83 (KHS) is a binding site for phosphate. Residues Gly-88 and Thr-90 each contribute to the K(+) site. Phosphate is bound by residues Thr-92, 108–110 (KMS), and Thr-120. Residues Arg-168 and Lys-187 each contribute to the substrate site. Positions 243, 246, and 255 each coordinate K(+).

The protein belongs to the thymidine/pyrimidine-nucleoside phosphorylase family. In terms of assembly, homodimer. Requires K(+) as cofactor.

The enzyme catalyses uridine + phosphate = alpha-D-ribose 1-phosphate + uracil. It carries out the reaction thymidine + phosphate = 2-deoxy-alpha-D-ribose 1-phosphate + thymine. It catalyses the reaction 2'-deoxyuridine + phosphate = 2-deoxy-alpha-D-ribose 1-phosphate + uracil. Functionally, catalyzes phosphorolysis of the pyrimidine nucleosides uridine, thymidine and 2'-deoxyuridine with the formation of the corresponding pyrimidine base and ribose-1-phosphate. This is Pyrimidine-nucleoside phosphorylase (pdp) from Staphylococcus aureus (strain NCTC 8325 / PS 47).